Here is a 186-residue protein sequence, read N- to C-terminus: Large ribosomal subunit protein uL5 (186 aa).

This sequence belongs to the universal ribosomal protein uL5 family. In terms of assembly, part of the 50S ribosomal subunit; part of the 5S rRNA/L5/L18/L25 subcomplex. Contacts the 5S rRNA and the P site tRNA. Forms a bridge to the 30S subunit in the 70S ribosome.

In terms of biological role, this is one of the proteins that bind and probably mediate the attachment of the 5S RNA into the large ribosomal subunit, where it forms part of the central protuberance. In the 70S ribosome it contacts protein S13 of the 30S subunit (bridge B1b), connecting the 2 subunits; this bridge is implicated in subunit movement. Contacts the P site tRNA; the 5S rRNA and some of its associated proteins might help stabilize positioning of ribosome-bound tRNAs. This chain is Large ribosomal subunit protein uL5, found in Jannaschia sp. (strain CCS1).